A 465-amino-acid polypeptide reads, in one-letter code: MESLRIYNTLARDKQVFVPRQPGEVRMYVCGITVYDYCHVGHARMLVVFDLVQRWLRAIGYRVTYVRNITDIDDKIIRRAVENGETIKSLTDRFIGAMHEDETALGIQRPDVEPRATQFIPQMLGMIETLETNGYAYQAADGDVNYSVRKFADYGKLSGKSLDDLRAGERVAANDAKQDPLDFVLWKRAKEDEPEGASWASKYGMGRPGWHIECSAMGCSLLGNHFDIHGGGQDLQFPHHENEIAQSEGATGETFVNYWMHNGFVQVDNEKMSKSLGNFFTIREVLERYDAEVVRFFIVRTHYRSPLNYSDVHLDDARASLTRLYTALKDVEPDTLALDWNEPHGQRFAAAMNDDFNTPVAVATLFELAGEVNRTRDASLARQLKQLAGLLGLLGREPRAFLQQASGAAQAGGLAADEIEAQIAARVAAKQAKDYAEADRIRAELLEAGIALEDKPGGSTEWRRV.

Cys-30 is a binding site for Zn(2+). The short motif at 32-42 (ITVYDYCHVGH) is the 'HIGH' region element. Cys-214, His-239, and Glu-243 together coordinate Zn(2+). The 'KMSKS' region motif lies at 271 to 275 (KMSKS). Lys-274 provides a ligand contact to ATP.

It belongs to the class-I aminoacyl-tRNA synthetase family. As to quaternary structure, monomer. Zn(2+) serves as cofactor.

The protein resides in the cytoplasm. The catalysed reaction is tRNA(Cys) + L-cysteine + ATP = L-cysteinyl-tRNA(Cys) + AMP + diphosphate. The polypeptide is Cysteine--tRNA ligase (Burkholderia orbicola (strain MC0-3)).